Here is a 118-residue protein sequence, read N- to C-terminus: MSSKNTIISQLEAEQMSKEIPEFAPGDTVTVSVKVVEGSRERLQAFEGVVIAKRNRGLNSSFTVRKVSYGVGVERTFQTHSRLVDSINVKRRGDVRKAKLYHLRDLSGKAARIKEKLD.

The protein belongs to the bacterial ribosomal protein bL19 family.

Its function is as follows. This protein is located at the 30S-50S ribosomal subunit interface and may play a role in the structure and function of the aminoacyl-tRNA binding site. In Hahella chejuensis (strain KCTC 2396), this protein is Large ribosomal subunit protein bL19.